The sequence spans 177 residues: Bifunctional protein PyrR (177 aa).

The PRPP-binding signature appears at Val-99–Thr-111.

This sequence belongs to the purine/pyrimidine phosphoribosyltransferase family. PyrR subfamily.

It catalyses the reaction UMP + diphosphate = 5-phospho-alpha-D-ribose 1-diphosphate + uracil. Regulates the transcription of the pyrimidine nucleotide (pyr) operon in response to exogenous pyrimidines. Functionally, also displays a weak uracil phosphoribosyltransferase activity which is not physiologically significant. The polypeptide is Bifunctional protein PyrR (Microcystis aeruginosa (strain NIES-843 / IAM M-2473)).